The primary structure comprises 462 residues: Argininosuccinate lyase (462 aa).

The protein belongs to the lyase 1 family. Argininosuccinate lyase subfamily.

The protein localises to the cytoplasm. It catalyses the reaction 2-(N(omega)-L-arginino)succinate = fumarate + L-arginine. It functions in the pathway amino-acid biosynthesis; L-arginine biosynthesis; L-arginine from L-ornithine and carbamoyl phosphate: step 3/3. This is Argininosuccinate lyase from Bacillus cereus (strain B4264).